We begin with the raw amino-acid sequence, 763 residues long: Phosphoglycerol transferase I (763 aa).

4 helical membrane-spanning segments follow: residues 1-21 (MSEL…AWKA), 26-46 (WWFA…ITLY), 77-97 (ILPG…LGWI), and 108-128 (VGYS…SPAF).

Belongs to the OpgB family.

It is found in the cell inner membrane. The catalysed reaction is a phosphatidylglycerol + a membrane-derived-oligosaccharide D-glucose = a 1,2-diacyl-sn-glycerol + a membrane-derived-oligosaccharide 6-(glycerophospho)-D-glucose.. The protein operates within glycan metabolism; osmoregulated periplasmic glucan (OPG) biosynthesis. Transfers a phosphoglycerol residue from phosphatidylglycerol to the membrane-bound nascent glucan backbones. This is Phosphoglycerol transferase I from Salmonella agona (strain SL483).